A 507-amino-acid chain; its full sequence is ATP synthase subunit alpha, chloroplastic (507 aa).

Position 170 to 177 (170 to 177) interacts with ATP; it reads GDRQTGKT.

This sequence belongs to the ATPase alpha/beta chains family. As to quaternary structure, F-type ATPases have 2 components, CF(1) - the catalytic core - and CF(0) - the membrane proton channel. CF(1) has five subunits: alpha(3), beta(3), gamma(1), delta(1), epsilon(1). CF(0) has four main subunits: a, b, b' and c.

The protein localises to the plastid. It is found in the chloroplast thylakoid membrane. It carries out the reaction ATP + H2O + 4 H(+)(in) = ADP + phosphate + 5 H(+)(out). Produces ATP from ADP in the presence of a proton gradient across the membrane. The alpha chain is a regulatory subunit. This Lemna minor (Common duckweed) protein is ATP synthase subunit alpha, chloroplastic.